Consider the following 105-residue polypeptide: Nucleoid-associated protein RPC_4847 (105 aa).

It belongs to the YbaB/EbfC family. As to quaternary structure, homodimer.

It localises to the cytoplasm. It is found in the nucleoid. In terms of biological role, binds to DNA and alters its conformation. May be involved in regulation of gene expression, nucleoid organization and DNA protection. This is Nucleoid-associated protein RPC_4847 from Rhodopseudomonas palustris (strain BisB18).